A 120-amino-acid chain; its full sequence is Large ribosomal subunit protein uL18 (120 aa).

The segment at Met1–Gly22 is disordered. Residues Ala8 to Ile20 show a composition bias toward basic residues.

It belongs to the universal ribosomal protein uL18 family. Part of the 50S ribosomal subunit; part of the 5S rRNA/L5/L18/L25 subcomplex. Contacts the 5S and 23S rRNAs.

Its function is as follows. This is one of the proteins that bind and probably mediate the attachment of the 5S RNA into the large ribosomal subunit, where it forms part of the central protuberance. This is Large ribosomal subunit protein uL18 from Gloeobacter violaceus (strain ATCC 29082 / PCC 7421).